The sequence spans 122 residues: Large ribosomal subunit protein uL14 (122 aa).

The protein belongs to the universal ribosomal protein uL14 family. In terms of assembly, part of the 50S ribosomal subunit. Forms a cluster with proteins L3 and L19. In the 70S ribosome, L14 and L19 interact and together make contacts with the 16S rRNA in bridges B5 and B8.

Functionally, binds to 23S rRNA. Forms part of two intersubunit bridges in the 70S ribosome. This is Large ribosomal subunit protein uL14 from Dehalococcoides mccartyi (strain ATCC BAA-2100 / JCM 16839 / KCTC 5957 / BAV1).